The chain runs to 369 residues: MAPPQQARVLRCCCCSLFQAHQVKKSLKWTCKACGKKQSFLQAYGEGSGADCRRHVQKLNLLQGQISEMSLRSLGESISANEEENVGPWQAARASPQETLQPSKNRWLKYLERDSKELGLKGGGVCFNSQPSSETEKPDPPFSTGLPRKRKWNQSTVQPLCGPHVQDSRNCEVTLKSLKARPLHPTWGARSSPDCSTWDLPCISEELPPSFTQDRAGLAGKGRESSREDLDTMELVPRGEPPCPAQQVRTMSKWEQCLGNSSHLDTEPLTPLQRGLRPIQAAQAEQGAPRAQTPREGGLCRLPGARQSPQTTHTPMPGPKWLCGRIPEQSQGTGPWAEGVPLVKGMQARSSLMRLCDLFKTGEDFDDDL.

The residue at position 115 (serine 115) is a Phosphoserine. 3 disordered regions span residues 122–150 (GGGV…PRKR), 209–245 (PSFT…PCPA), and 282–317 (AQAE…TPMP). A Nuclear localization signal (NLS) motif is present at residues 148–151 (RKRK). Over residues 221–230 (KGRESSREDL) the composition is skewed to basic and acidic residues. Residues 223 to 259 (RESSREDLDTMELVPRGEPPCPAQQVRTMSKWEQCLG) are necessary for the association with the MRN complex.

This sequence belongs to the MRNIP family. In terms of assembly, associates with the MRE11-RAD50-NBN (MRN) damage-sensing complex; this association is constitutive. Interacts with MRE11. Interacts with NBN. Interacts with RAD50. Post-translationally, phosphorylated; phosphorylation is constitutive and occurs in the absence of any DNA-damaging stimulus. Phosphorylation on Ser-115 is necessary for its nuclear retention.

Its subcellular location is the nucleus. The protein resides in the nucleoplasm. Plays a role in the cellular response to DNA damage and the maintenance of genome stability through its association with the MRN damage-sensing complex. Promotes chromatin loading and activity of the MRN complex to facilitate subsequent ATM-mediated DNA damage response signaling and DNA repair. In Bos taurus (Bovine), this protein is MRN complex-interacting protein.